The following is a 249-amino-acid chain: Aspartate/glutamate leucyltransferase (249 aa).

It belongs to the R-transferase family. Bpt subfamily.

It is found in the cytoplasm. It catalyses the reaction N-terminal L-glutamyl-[protein] + L-leucyl-tRNA(Leu) = N-terminal L-leucyl-L-glutamyl-[protein] + tRNA(Leu) + H(+). The catalysed reaction is N-terminal L-aspartyl-[protein] + L-leucyl-tRNA(Leu) = N-terminal L-leucyl-L-aspartyl-[protein] + tRNA(Leu) + H(+). Functionally, functions in the N-end rule pathway of protein degradation where it conjugates Leu from its aminoacyl-tRNA to the N-termini of proteins containing an N-terminal aspartate or glutamate. In Brucella canis (strain ATCC 23365 / NCTC 10854 / RM-666), this protein is Aspartate/glutamate leucyltransferase.